The following is a 332-amino-acid chain: Malate dehydrogenase, cytoplasmic (332 aa).

Residues 11 to 17 (GAAGQIA) and aspartate 42 each bind NAD(+). Positions 92 and 98 each coordinate substrate. Residues asparagine 105, glutamine 112, and 129–131 (VGN) contribute to the NAD(+) site. Residues asparagine 131 and arginine 162 each contribute to the substrate site. Catalysis depends on histidine 187, which acts as the Proton acceptor.

The protein belongs to the LDH/MDH superfamily. MDH type 2 family. In terms of assembly, homodimer.

Its subcellular location is the cytoplasm. It catalyses the reaction (S)-malate + NAD(+) = oxaloacetate + NADH + H(+). By arsenate for both the forward and reverse reactions. Malate dehydrogenase. Has no activity with NADPH as substrate. Does not show lactate dehydrogenase activity. In Taenia solium (Pork tapeworm), this protein is Malate dehydrogenase, cytoplasmic.